A 561-amino-acid chain; its full sequence is 4-coumarate--CoA ligase 3 (561 aa).

The ATP site is built by Ser-213, Ser-214, Gly-215, Thr-216, Thr-217, and Lys-221. 2 residues coordinate (E)-4-coumaroyl-AMP: Tyr-263 and Ser-267. Residue Lys-284 participates in CoA binding. Positions 286–355 (EIGALLDLIQ…RRLPQAILGQ (70 aa)) are SBD1. Ala-333, Gln-355, Gly-356, Thr-360, and Met-368 together coordinate (E)-4-coumaroyl-AMP. ATP is bound by residues Gln-355, Gly-356, and Thr-360. Residues 356–423 (GYGMTEAGPV…IRGQQIMKEY (68 aa)) form an SBD2 region. ATP-binding residues include Asp-444 and Arg-459. The (E)-4-coumaroyl-AMP site is built by Lys-461 and Lys-465. Positions 467 and 468 each coordinate CoA. Lys-550 serves as a coordination point for ATP.

It belongs to the ATP-dependent AMP-binding enzyme family. Requires Mg(2+) as cofactor. In terms of tissue distribution, preferentially expressed in leaves, flowers and siliques.

The catalysed reaction is (E)-4-coumarate + ATP + CoA = (E)-4-coumaroyl-CoA + AMP + diphosphate. The enzyme catalyses (E)-caffeate + ATP + CoA = (E)-caffeoyl-CoA + AMP + diphosphate. It catalyses the reaction (E)-ferulate + ATP + CoA = (E)-feruloyl-CoA + AMP + diphosphate. It carries out the reaction (E)-4-coumarate + ATP + H(+) = (E)-4-coumaroyl-AMP + diphosphate. The catalysed reaction is (E)-4-coumaroyl-AMP + CoA = (E)-4-coumaroyl-CoA + AMP + H(+). The enzyme catalyses (E)-caffeate + ATP + H(+) = (E)-caffeoyl-AMP + diphosphate. It catalyses the reaction (E)-caffeoyl-AMP + CoA = (E)-caffeoyl-CoA + AMP + H(+). It carries out the reaction (E)-ferulate + ATP + H(+) = (E)-feruloyl-AMP + diphosphate. The catalysed reaction is (E)-feruloyl-AMP + CoA = (E)-feruloyl-CoA + AMP + H(+). It participates in phytoalexin biosynthesis; 3,4',5-trihydroxystilbene biosynthesis; 3,4',5-trihydroxystilbene from trans-4-coumarate: step 1/2. In terms of biological role, produces CoA thioesters of a variety of hydroxy- and methoxy-substituted cinnamic acids, which are used to synthesize several phenylpropanoid-derived compounds, including anthocyanins, flavonoids, isoflavonoids, coumarins, lignin, suberin and wall-bound phenolics. Follows a two-step reaction mechanism, wherein the carboxylate substrate first undergoes adenylation by ATP, followed by a thioesterification in the presence of CoA to yield the final CoA thioesters. The polypeptide is 4-coumarate--CoA ligase 3 (Arabidopsis thaliana (Mouse-ear cress)).